We begin with the raw amino-acid sequence, 986 residues long: Leucine-rich repeat receptor-like kinase protein HAR1 (986 aa).

The signal sequence occupies residues 1–25 (MRIRVSYLLVLCFTLIWFRWTVVYS). LRR repeat units follow at residues 71–97 (DQNL…IGLL), 98–121 (EKLE…LASL), 123–145 (SLKV…ITVG), 146–170 (MTEL…IVKL), 171–196 (EKLK…EFQS), 198–218 (EFLG…LAKL), 243–267 (MENL…LGNL), 268–291 (TKLH…LSSM), 293–314 (SLMS…SFSK), 316–339 (KNLT…IGDL), 340–363 (PNLE…LGGN), 365–387 (RFLY…LCKS), 388–411 (GRLK…IGEC), 412–435 (RSLT…VFQL), 437–458 (SVTI…VISG), 459–482 (ESLG…MKNL), 483–506 (RALQ…VFEI), 508–530 (MLTK…ITHR), 531–554 (ASLT…MKNL), 555–578 (MDLS…IRFM), and 579–603 (TSLT…QFLV). N-linked (GlcNAc...) asparagine glycosylation is found at Asn80, Asn102, Asn109, Asn128, and Asn141. Residues Asn255, Asn266, and Asn279 are each glycosylated (N-linked (GlcNAc...) asparagine). N-linked (GlcNAc...) asparagine glycosylation is found at Asn317 and Asn351. N-linked (GlcNAc...) asparagine glycosylation is found at Asn513 and Asn518. Residues Asn561 and Asn590 are each glycosylated (N-linked (GlcNAc...) asparagine). The helical transmembrane segment at 645–665 (IVIGIALATAVLLVAVTVHVV) threads the bilayer. One can recognise a Protein kinase domain in the interval 695 to 971 (LKEENIIGKG…TMREVVHMLT (277 aa)). ATP-binding positions include 701 to 709 (IGKGGAGIV) and Lys723. Asp820 functions as the Proton acceptor in the catalytic mechanism.

This sequence belongs to the protein kinase superfamily. Ser/Thr protein kinase family. In terms of tissue distribution, expressed in roots, leaves, stems and flowers.

The protein localises to the cell membrane. The catalysed reaction is L-seryl-[protein] + ATP = O-phospho-L-seryl-[protein] + ADP + H(+). It catalyses the reaction L-threonyl-[protein] + ATP = O-phospho-L-threonyl-[protein] + ADP + H(+). Functionally, LRR receptor kinase involved in the regulation of root and shoot growth, and root nodule organogenesis. Involved in long distance nodulation signaling events. Involved in the autoregulation of nodulation (AON), a long distance systemic signaling from root to shoot and back again, which allows legumes to limit the number of root nodules formed based on available nitrogen and previous rhizobial colonization. Acts from shoot to root to control AON. Involved in the regulation of root colonization by arbuscular mycorrhizal (AM) fungi. The protein is Leucine-rich repeat receptor-like kinase protein HAR1 of Lotus japonicus (Lotus corniculatus var. japonicus).